The primary structure comprises 290 residues: Arylamine N-acetyltransferase 1 (290 aa).

At methionine 1 the chain carries N-acetylmethionine. Catalysis depends on cysteine 68, which acts as the Acyl-thioester intermediate. Residues threonine 103 and glycine 104 each contribute to the CoA site. 106-107 provides a ligand contact to substrate; that stretch reads IH. Residues histidine 107 and aspartate 122 contribute to the active site. CoA-binding residues include tyrosine 208 and serine 214.

It belongs to the arylamine N-acetyltransferase family.

Its subcellular location is the cytoplasm. It carries out the reaction an arylamine + acetyl-CoA = an N-acetylarylamine + CoA. Its function is as follows. Participates in the detoxification of a plethora of hydrazine and arylamine drugs. Catalyzes the N- or O-acetylation of various arylamine and heterocyclic amine substrates and is able to bioactivate several known carcinogens. The polypeptide is Arylamine N-acetyltransferase 1 (NAT1) (Homo sapiens (Human)).